The chain runs to 281 residues: CCAAT/enhancer-binding protein epsilon (281 aa).

A disordered region spans residues 1 to 30 (MSHGTYYECEPRGGQQPLEFSGGRAGPGEL). Lysine 121 participates in a covalent cross-link: Glycyl lysine isopeptide (Lys-Gly) (interchain with G-Cter in SUMO2). Serine 181 bears the Phosphoserine mark. The bZIP domain maps to 204 to 267 (SLEYRLRRER…DTLRNLFRQI (64 aa)). The interval 208 to 245 (RLRRERNNIAVRKSRDKAKRRIMETQQKVLEYMAENER) is basic motif. The segment at 246-267 (LRSRVDQLTQELDTLRNLFRQI) is leucine-zipper.

The protein belongs to the bZIP family. C/EBP subfamily. As to quaternary structure, binds DNA as a homodimer and as a heterodimer. Can form stable heterodimers with CEBPA, CEBPB and CEBPD. Interacts with GATA1 and SPI1. Interacts with SMARCD2.

The protein resides in the nucleus. Transcriptional activator. C/EBP are DNA-binding proteins that recognize two different motifs: the CCAAT homology common to many promoters and the enhanced core homology common to many enhancers. Required for the promyelocyte-myelocyte transition in myeloid differentiation. The polypeptide is CCAAT/enhancer-binding protein epsilon (Cebpe) (Rattus norvegicus (Rat)).